The primary structure comprises 194 residues: Probable GTP-binding protein EngB (194 aa).

The EngB-type G domain occupies 22-194 (PLPEVALAGR…AWKAILHAIS (173 aa)). GTP contacts are provided by residues 30 to 37 (GRSNVGKS), 57 to 61 (GKTQT), 75 to 78 (DVPG), 142 to 145 (TKCD), and 174 to 176 (FSS). The Mg(2+) site is built by Ser-37 and Thr-59.

This sequence belongs to the TRAFAC class TrmE-Era-EngA-EngB-Septin-like GTPase superfamily. EngB GTPase family. Mg(2+) serves as cofactor.

In terms of biological role, necessary for normal cell division and for the maintenance of normal septation. The protein is Probable GTP-binding protein EngB of Halalkalibacterium halodurans (strain ATCC BAA-125 / DSM 18197 / FERM 7344 / JCM 9153 / C-125) (Bacillus halodurans).